The chain runs to 1107 residues: MAAVSFDEKVLAAKKIICDIEGTTSSISFVKDVLFPYALKHVEEYLKNHWSEDATKTVVAALREQADEDKKAEVEGVVTIPAGDSEDIIPDVVKNVEWQMSQDRKTGALKTLQGLVWAKGYKDGTIKGHVYEDVKKALEQWNESGRKVYIYSSGSVDAQKLLFEHSEQGDLIKYVAGYYDTKIGAKQEKNSYEAILKNIEATGEEALFLTDVVAEAKAAKDAGLNVVVLDRPGNAELSEEDRKEFTVISSFTDLPIESVKSTETENGAEKETVTESTEKVADESEKETETETAAAETENGAEAENGASKRKIDETAQDDEAQRPSKVVKVDQNGDSPAVDGAKQNGDSAEEPATLSETNGKSTGEDAMDVDAEMTDVESSSTTKAAEAGTGKVTEKTETEESPKEKETEMEAEAEVSKTDEKEDTKQQGESVTDGEDKKGDVINKNAEDDIKVEEEKNKEEESAPPTKKAKIEEDKMDVDEEDSAVIEKKADNVDEKPVESTTDEVAKKEENLVETPVDTAKPEVTTSEIAVTDETKEAPSDAAKEESVTSTSKTEEEKSDDLVPTTTSEQTVEKSSAEKTESKSEEETDSGTSEKKVEDKSANNEEEQKEPKESVVAEKKEEEIKVKTADEETKSMETDEVTVEKSNTKEVKDDNEQIPDSKADQDFNAKEAAKETVSEELEVKADAIVPADESKPKAQNDETKEKVTKAEEVTKTAETKTEEEEAKKTEEDAKKTEEDAKKTEKEVKKTDEEMPTEEIKMKDEPTVPEKSKSVDEPMATEESVATKEETLAEETSATTEAQATKEDEKPVDTKTNENDKTTPEVKATEEKTDDAKSTEVATATEEDKEMKEANSAEESVETKEKKTEETHTTDEDKPKESDVAKPDVVEKQEEKMETSEQVDETKGVEATTAGPVEEVAVEATEEDVAMEAESSDAVKEETKTEEPKSKVDKLDSEAMEVDSASTSQNEAKNESVKPAETAAVEESKTESDVVSTTSTDEVKENGTSEKVNTKEESRVPENGEADSKVTTNGNHDEKADSDKENDTSASNIEEASSATTTTTNGTSTESDSSSTTPSSETVAEIKSKKATDAVADSATPSVETES.

Asp-19 and Glu-21 together coordinate Mg(2+). Substrate is bound by residues 152 to 153 (SS) and Lys-186. Asp-211 is a binding site for Mg(2+). Positions 258–1107 (SVKSTETENG…SATPSVETES (850 aa)) are disordered. Positions 260–289 (KSTETENGAEKETVTESTEKVADESEKETE) are enriched in basic and acidic residues. The segment covering 291-306 (ETAAAETENGAEAENG) has biased composition (low complexity). Residues 366-376 (DAMDVDAEMTD) show a composition bias toward acidic residues. Composition is skewed to basic and acidic residues over residues 393 to 427 (VTEKTETEESPKEKETEMEAEAEVSKTDEKEDTKQ) and 435 to 462 (GEDKKGDVINKNAEDDIKVEEEKNKEEE). A compositionally biased stretch (acidic residues) spans 475 to 485 (DKMDVDEEDSA). Basic and acidic residues-rich tracts occupy residues 486 to 512 (VIEKKADNVDEKPVESTTDEVAKKEEN), 534 to 548 (DETKEAPSDAAKEES), 572 to 586 (TVEKSSAEKTESKSE), 593 to 604 (TSEKKVEDKSAN), 610 to 686 (KEPK…EVKA), and 693 to 776 (DESK…KSVD). The span at 794–803 (EETSATTEAQ) shows a compositional bias: low complexity. Composition is skewed to basic and acidic residues over residues 804 to 838 (ATKEDEKPVDTKTNENDKTTPEVKATEEKTDDAKS) and 849 to 908 (KEMK…ETKG). A compositionally biased stretch (low complexity) spans 909 to 919 (VEATTAGPVEE). Over residues 920–935 (VAVEATEEDVAMEAES) the composition is skewed to acidic residues. 3 stretches are compositionally biased toward basic and acidic residues: residues 937–957 (DAVKEETKTEEPKSKVDKLDS), 1001–1028 (DEVKENGTSEKVNTKEESRVPENGEADS), and 1035–1047 (NHDEKADSDKEND). Residues 1048–1083 (TSASNIEEASSATTTTTNGTSTESDSSSTTPSSETV) show a composition bias toward low complexity.

Belongs to the HAD-like hydrolase superfamily. MasA/MtnC family. As to quaternary structure, monomer. Mg(2+) serves as cofactor.

It localises to the cytoplasm. It is found in the nucleus. It carries out the reaction 5-methylsulfanyl-2,3-dioxopentyl phosphate + H2O = 1,2-dihydroxy-5-(methylsulfanyl)pent-1-en-3-one + phosphate. Its pathway is amino-acid biosynthesis; L-methionine biosynthesis via salvage pathway; L-methionine from S-methyl-5-thio-alpha-D-ribose 1-phosphate: step 3/6. It participates in amino-acid biosynthesis; L-methionine biosynthesis via salvage pathway; L-methionine from S-methyl-5-thio-alpha-D-ribose 1-phosphate: step 4/6. Its function is as follows. Bifunctional enzyme that catalyzes the enolization of 2,3-diketo-5-methylthiopentyl-1-phosphate (DK-MTP-1-P) into the intermediate 2-hydroxy-3-keto-5-methylthiopentenyl-1-phosphate (HK-MTPenyl-1-P), which is then dephosphorylated to form the acireductone 1,2-dihydroxy-3-keto-5-methylthiopentene (DHK-MTPene). This chain is Enolase-phosphatase E1, found in Aedes aegypti (Yellowfever mosquito).